Here is a 101-residue protein sequence, read N- to C-terminus: Feather keratin Cos2-2 (101 aa).

S2 carries the post-translational modification N-acetylserine.

The protein belongs to the avian keratin family. As to quaternary structure, the avian keratins (F-ker, S-ker, C-ker and B-ker) are a complex mixture of very similar polypeptides.

The chain is Feather keratin Cos2-2 from Columba livia (Rock dove).